The primary structure comprises 548 residues: uncharacterized protein (548 aa).

Residues 8 to 200 enclose the DhaL domain; sequence KLFADMIIQG…LLCVYEGFLK (193 aa).

This is an uncharacterized protein from Staphylococcus aureus (strain MRSA252).